A 69-amino-acid chain; its full sequence is MDLNLREAIMHNVANNTKEQLEHTIEDAIQRGEEKYLPGLGVLFEAIWTHANEQQKDMMLTTLEQAVKQ.

It belongs to the SspI family.

It is found in the spore core. In Geobacillus kaustophilus (strain HTA426), this protein is Small, acid-soluble spore protein I.